We begin with the raw amino-acid sequence, 188 residues long: Protein SSX3 (188 aa).

Residues 20–83 (KIQKAFDDIA…KRVTDFQGND (64 aa)) form the KRAB-related domain. The disordered stretch occupies residues 113-162 (PKKPAEEGNVSKEVPEASGPQNDGKQLCPPGKPTTSEKINMISGPKRGEH). Positions 115–127 (KPAEEGNVSKEVP) are enriched in basic and acidic residues. At serine 123 the chain carries Phosphoserine.

It belongs to the SSX family. Interacts with SSX2IP.

Its function is as follows. Could act as a modulator of transcription. This Homo sapiens (Human) protein is Protein SSX3 (SSX3).